A 330-amino-acid chain; its full sequence is AH receptor-interacting protein (330 aa).

The 91-residue stretch at Gly-31–Cys-121 folds into the PPIase FKBP-type domain. Ser-43 is modified (phosphoserine). 3 TPR repeats span residues Val-179–Leu-212, Thr-231–Asn-264, and Val-265–Leu-298.

Interacts with RET in the pituitary gland; this interaction prevents the formation of the AIP-survivin complex.

Its subcellular location is the cytoplasm. May play a positive role in AHR-mediated (aromatic hydrocarbon receptor) signaling, possibly by influencing its receptivity for ligand and/or its nuclear targeting. This chain is AH receptor-interacting protein (Aip), found in Mus musculus (Mouse).